A 114-amino-acid chain; its full sequence is MMKSLRVLLVILWLQLSWVWSQQKEVEQDPGPLSVPEGAIVSLNCTYSNSAFQYFMWYRQYSRKGPELLMYTYSSGNKEDGRFTAQVDKSSKYISLFIRDSQPSDSATYLCAMS.

An N-terminal signal peptide occupies residues 1–21 (MMKSLRVLLVILWLQLSWVWS). The Ig-like domain maps to 24–114 (KEVEQDPGPL…DSATYLCAMS (91 aa)). Residue Asn44 is glycosylated (N-linked (GlcNAc...) asparagine). Cys45 and Cys111 are disulfide-bonded.

As to quaternary structure, alpha-beta TR is a heterodimer composed of an alpha and beta chain; disulfide-linked. The alpha-beta TR is associated with the transmembrane signaling CD3 coreceptor proteins to form the TR-CD3 (TcR or TCR). The assembly of alpha-beta TR heterodimers with CD3 occurs in the endoplasmic reticulum where a single alpha-beta TR heterodimer associates with one CD3D-CD3E heterodimer, one CD3G-CD3E heterodimer and one CD247 homodimer forming a stable octameric structure. CD3D-CD3E and CD3G-CD3E heterodimers preferentially associate with TR alpha and TR beta chains, respectively. The association of the CD247 homodimer is the last step of TcR assembly in the endoplasmic reticulum and is required for transport to the cell surface.

The protein localises to the cell membrane. Functionally, v region of the variable domain of T cell receptor (TR) alpha chain that participates in the antigen recognition. Alpha-beta T cell receptors are antigen specific receptors which are essential to the immune response and are present on the cell surface of T lymphocytes. Recognize peptide-major histocompatibility (MH) (pMH) complexes that are displayed by antigen presenting cells (APC), a prerequisite for efficient T cell adaptive immunity against pathogens. Binding of alpha-beta TR to pMH complex initiates TR-CD3 clustering on the cell surface and intracellular activation of LCK that phosphorylates the ITAM motifs of CD3G, CD3D, CD3E and CD247 enabling the recruitment of ZAP70. In turn ZAP70 phosphorylates LAT, which recruits numerous signaling molecules to form the LAT signalosome. The LAT signalosome propagates signal branching to three major signaling pathways, the calcium, the mitogen-activated protein kinase (MAPK) kinase and the nuclear factor NF-kappa-B (NF-kB) pathways, leading to the mobilization of transcription factors that are critical for gene expression and essential for T cell growth and differentiation. The T cell repertoire is generated in the thymus, by V-(D)-J rearrangement. This repertoire is then shaped by intrathymic selection events to generate a peripheral T cell pool of self-MH restricted, non-autoaggressive T cells. Post-thymic interaction of alpha-beta TR with the pMH complexes shapes TR structural and functional avidity. This chain is T cell receptor alpha variable 12-3, found in Homo sapiens (Human).